A 225-amino-acid chain; its full sequence is MNSIQFPLLDRTTQNSVISTTLNDLSNWSRLSSLWPLLYGTSCCFIEFASLIGSRFDFDRYGLVPRSSPRQADLILTAGTVTMKMAPSLVRLYEQMPEPKYVIAMGACTITGGMFSTDSYSTVRGVDKLIPVDVYLPGCPPKPEAVIDAITKLRKKISRELYEDRIRSQRANRCFTTNHKFHVQHSIHTGNYDQRVLYQPPSTSEIPTEIFFKYKNSVSSPELVN.

4 residues coordinate [4Fe-4S] cluster: Cys-43, Cys-44, Cys-108, and Cys-139.

Belongs to the complex I 20 kDa subunit family. As to quaternary structure, NDH is composed of at least 16 different subunits, 5 of which are encoded in the nucleus. [4Fe-4S] cluster serves as cofactor.

Its subcellular location is the plastid. The protein localises to the chloroplast thylakoid membrane. It carries out the reaction a plastoquinone + NADH + (n+1) H(+)(in) = a plastoquinol + NAD(+) + n H(+)(out). The enzyme catalyses a plastoquinone + NADPH + (n+1) H(+)(in) = a plastoquinol + NADP(+) + n H(+)(out). In terms of biological role, NDH shuttles electrons from NAD(P)H:plastoquinone, via FMN and iron-sulfur (Fe-S) centers, to quinones in the photosynthetic chain and possibly in a chloroplast respiratory chain. The immediate electron acceptor for the enzyme in this species is believed to be plastoquinone. Couples the redox reaction to proton translocation, and thus conserves the redox energy in a proton gradient. The chain is NAD(P)H-quinone oxidoreductase subunit K, chloroplastic from Nicotiana tabacum (Common tobacco).